A 297-amino-acid chain; its full sequence is 4-hydroxy-tetrahydrodipicolinate synthase (297 aa).

T50 contributes to the pyruvate binding site. Y138 (proton donor/acceptor) is an active-site residue. The Schiff-base intermediate with substrate role is filled by K166. Residue I208 participates in pyruvate binding.

This sequence belongs to the DapA family. Homotetramer; dimer of dimers.

Its subcellular location is the cytoplasm. It carries out the reaction L-aspartate 4-semialdehyde + pyruvate = (2S,4S)-4-hydroxy-2,3,4,5-tetrahydrodipicolinate + H2O + H(+). It participates in amino-acid biosynthesis; L-lysine biosynthesis via DAP pathway; (S)-tetrahydrodipicolinate from L-aspartate: step 3/4. In terms of biological role, catalyzes the condensation of (S)-aspartate-beta-semialdehyde [(S)-ASA] and pyruvate to 4-hydroxy-tetrahydrodipicolinate (HTPA). The chain is 4-hydroxy-tetrahydrodipicolinate synthase from Desulfotalea psychrophila (strain LSv54 / DSM 12343).